A 438-amino-acid chain; its full sequence is sn-glycerol-3-phosphate-binding periplasmic protein UgpB (438 aa).

The N-terminal stretch at 1 to 23 (MKPLHYTASALALGLALMGNAQA) is a signal peptide. Sn-glycerol 3-phosphate is bound by residues Tyr-65, Glu-89, Ser-144, Ser-270, Gly-307, Tyr-346, and Arg-397.

This sequence belongs to the bacterial solute-binding protein 1 family. As to quaternary structure, the complex is composed of two ATP-binding proteins (UgpC), two transmembrane proteins (UgpA and UgpE) and a solute-binding protein (UgpB).

It localises to the periplasm. Its function is as follows. Part of the ABC transporter complex UgpBAEC involved in sn-glycerol-3-phosphate (G3P) import. Binds G3P. The protein is sn-glycerol-3-phosphate-binding periplasmic protein UgpB (ugpB) of Escherichia coli O157:H7.